We begin with the raw amino-acid sequence, 61 residues long: Large ribosomal subunit protein uL30 (61 aa).

This sequence belongs to the universal ribosomal protein uL30 family. Part of the 50S ribosomal subunit.

The protein is Large ribosomal subunit protein uL30 of Thermosipho melanesiensis (strain DSM 12029 / CIP 104789 / BI429).